The sequence spans 354 residues: Biotin synthase (354 aa).

A Radical SAM core domain is found at 41–268 (NEVQISRLLS…LSRVRLSAGR (228 aa)). [4Fe-4S] cluster is bound by residues Cys56, Cys60, and Cys63. Residues Cys100, Cys131, Cys191, and Arg263 each contribute to the [2Fe-2S] cluster site.

Belongs to the radical SAM superfamily. Biotin synthase family. Homodimer. The cofactor is [4Fe-4S] cluster. [2Fe-2S] cluster serves as cofactor.

The enzyme catalyses (4R,5S)-dethiobiotin + (sulfur carrier)-SH + 2 reduced [2Fe-2S]-[ferredoxin] + 2 S-adenosyl-L-methionine = (sulfur carrier)-H + biotin + 2 5'-deoxyadenosine + 2 L-methionine + 2 oxidized [2Fe-2S]-[ferredoxin]. Its pathway is cofactor biosynthesis; biotin biosynthesis; biotin from 7,8-diaminononanoate: step 2/2. Its function is as follows. Catalyzes the conversion of dethiobiotin (DTB) to biotin by the insertion of a sulfur atom into dethiobiotin via a radical-based mechanism. In Shewanella amazonensis (strain ATCC BAA-1098 / SB2B), this protein is Biotin synthase.